A 578-amino-acid polypeptide reads, in one-letter code: Putative multidrug export ATP-binding/permease protein SA1683 (578 aa).

Topologically, residues methionine 1–arginine 15 are cytoplasmic. The chain crosses the membrane as a helical span at residues isoleucine 16–leucine 36. Residues isoleucine 16 to glutamine 306 form the ABC transmembrane type-1 domain. The Extracellular portion of the chain corresponds to isoleucine 37–leucine 59. The helical transmembrane segment at threonine 60–isoleucine 80 threads the bilayer. Over arginine 81 to glycine 138 the chain is Cytoplasmic. Residues leucine 139–leucine 159 form a helical membrane-spanning segment. Over aspartate 160–lysine 162 the chain is Extracellular. A helical membrane pass occupies residues leucine 163–glycine 183. Residues arginine 184 to asparagine 244 are Cytoplasmic-facing. Residues alanine 245 to isoleucine 263 traverse the membrane as a helical segment. Over glycine 264–leucine 269 the chain is Extracellular. A helical membrane pass occupies residues alanine 270–leucine 287. The Cytoplasmic segment spans residues glutamate 288–leucine 578. The ABC transporter domain maps to isoleucine 340–isoleucine 575. Glycine 374 to serine 381 contacts ATP.

This sequence belongs to the ABC transporter superfamily. As to quaternary structure, homodimer.

The protein resides in the cell membrane. Its function is as follows. May be involved in multidrug export. Transmembrane domains (TMD) form a pore in the cell membrane and the ATP-binding domain (NBD) is responsible for energy generation. This Staphylococcus aureus (strain N315) protein is Putative multidrug export ATP-binding/permease protein SA1683.